The sequence spans 318 residues: Energy-coupling factor transporter ATP-binding protein EcfA2 (318 aa).

The ABC transporter domain maps to 22–271; the sequence is LRAQGLKCVF…PEIMQTTSIA (250 aa). 59 to 66 contributes to the ATP binding site; the sequence is GNSGSGKS.

Belongs to the ABC transporter superfamily. Energy-coupling factor EcfA family. As to quaternary structure, forms a stable energy-coupling factor (ECF) transporter complex composed of 2 membrane-embedded substrate-binding proteins (S component), 2 ATP-binding proteins (A component) and 2 transmembrane proteins (T component).

Its subcellular location is the cell membrane. Its function is as follows. ATP-binding (A) component of a common energy-coupling factor (ECF) ABC-transporter complex. Unlike classic ABC transporters this ECF transporter provides the energy necessary to transport a number of different substrates. The protein is Energy-coupling factor transporter ATP-binding protein EcfA2 of Mycoplasmoides gallisepticum (strain R(low / passage 15 / clone 2)) (Mycoplasma gallisepticum).